Here is a 248-residue protein sequence, read N- to C-terminus: Leucyl/phenylalanyl-tRNA--protein transferase (248 aa).

It belongs to the L/F-transferase family.

It is found in the cytoplasm. The catalysed reaction is N-terminal L-lysyl-[protein] + L-leucyl-tRNA(Leu) = N-terminal L-leucyl-L-lysyl-[protein] + tRNA(Leu) + H(+). It catalyses the reaction N-terminal L-arginyl-[protein] + L-leucyl-tRNA(Leu) = N-terminal L-leucyl-L-arginyl-[protein] + tRNA(Leu) + H(+). The enzyme catalyses L-phenylalanyl-tRNA(Phe) + an N-terminal L-alpha-aminoacyl-[protein] = an N-terminal L-phenylalanyl-L-alpha-aminoacyl-[protein] + tRNA(Phe). Functions in the N-end rule pathway of protein degradation where it conjugates Leu, Phe and, less efficiently, Met from aminoacyl-tRNAs to the N-termini of proteins containing an N-terminal arginine or lysine. This is Leucyl/phenylalanyl-tRNA--protein transferase from Ralstonia pickettii (strain 12J).